The sequence spans 495 residues: Phosphomethylpyrimidine synthase (495 aa).

Residues Asn-125, Met-154, Tyr-183, His-219, 239–241 (SRG), 280–283 (DGLR), and Glu-319 each bind substrate. His-323 contacts Zn(2+). Tyr-346 provides a ligand contact to substrate. His-387 is a binding site for Zn(2+). [4Fe-4S] cluster-binding residues include Cys-467, Cys-470, and Cys-475.

It belongs to the ThiC family. It depends on [4Fe-4S] cluster as a cofactor.

The catalysed reaction is 5-amino-1-(5-phospho-beta-D-ribosyl)imidazole + S-adenosyl-L-methionine = 4-amino-2-methyl-5-(phosphooxymethyl)pyrimidine + CO + 5'-deoxyadenosine + formate + L-methionine + 3 H(+). It participates in cofactor biosynthesis; thiamine diphosphate biosynthesis. Its function is as follows. Catalyzes the synthesis of the hydroxymethylpyrimidine phosphate (HMP-P) moiety of thiamine from aminoimidazole ribotide (AIR) in a radical S-adenosyl-L-methionine (SAM)-dependent reaction. The protein is Phosphomethylpyrimidine synthase of Leptospira interrogans serogroup Icterohaemorrhagiae serovar Lai (strain 56601).